Consider the following 460-residue polypeptide: Bifunctional protein GlmU (460 aa).

The segment at Met1–Arg229 is pyrophosphorylase. UDP-N-acetyl-alpha-D-glucosamine-binding positions include Leu8 to Gly11, Lys22, Gln72, and Gly77 to Thr78. Residue Asp102 coordinates Mg(2+). Positions 139, 154, 169, and 227 each coordinate UDP-N-acetyl-alpha-D-glucosamine. A Mg(2+)-binding site is contributed by Asn227. A linker region spans residues Val230–Asn250. The tract at residues Gly251 to Lys460 is N-acetyltransferase. Residues Arg332 and Lys350 each contribute to the UDP-N-acetyl-alpha-D-glucosamine site. Residue His362 is the Proton acceptor of the active site. Residues Tyr365 and Asn376 each coordinate UDP-N-acetyl-alpha-D-glucosamine. Acetyl-CoA is bound by residues Ala379, Asn385–Tyr386, Ser404, Ala422, and Arg439.

In the N-terminal section; belongs to the N-acetylglucosamine-1-phosphate uridyltransferase family. This sequence in the C-terminal section; belongs to the transferase hexapeptide repeat family. Homotrimer. It depends on Mg(2+) as a cofactor.

Its subcellular location is the cytoplasm. The enzyme catalyses alpha-D-glucosamine 1-phosphate + acetyl-CoA = N-acetyl-alpha-D-glucosamine 1-phosphate + CoA + H(+). It carries out the reaction N-acetyl-alpha-D-glucosamine 1-phosphate + UTP + H(+) = UDP-N-acetyl-alpha-D-glucosamine + diphosphate. The protein operates within nucleotide-sugar biosynthesis; UDP-N-acetyl-alpha-D-glucosamine biosynthesis; N-acetyl-alpha-D-glucosamine 1-phosphate from alpha-D-glucosamine 6-phosphate (route II): step 2/2. It participates in nucleotide-sugar biosynthesis; UDP-N-acetyl-alpha-D-glucosamine biosynthesis; UDP-N-acetyl-alpha-D-glucosamine from N-acetyl-alpha-D-glucosamine 1-phosphate: step 1/1. Its pathway is bacterial outer membrane biogenesis; LPS lipid A biosynthesis. Functionally, catalyzes the last two sequential reactions in the de novo biosynthetic pathway for UDP-N-acetylglucosamine (UDP-GlcNAc). The C-terminal domain catalyzes the transfer of acetyl group from acetyl coenzyme A to glucosamine-1-phosphate (GlcN-1-P) to produce N-acetylglucosamine-1-phosphate (GlcNAc-1-P), which is converted into UDP-GlcNAc by the transfer of uridine 5-monophosphate (from uridine 5-triphosphate), a reaction catalyzed by the N-terminal domain. In Streptococcus pyogenes serotype M49 (strain NZ131), this protein is Bifunctional protein GlmU.